The sequence spans 529 residues: Bifunctional purine biosynthesis protein PurH (529 aa).

Residues 1–148 (MQQRRPVRRA…KNHKDVAIVV (148 aa)) form the MGS-like domain. Residue Lys287 is modified to N6-acetyllysine.

This sequence belongs to the PurH family.

It catalyses the reaction (6R)-10-formyltetrahydrofolate + 5-amino-1-(5-phospho-beta-D-ribosyl)imidazole-4-carboxamide = 5-formamido-1-(5-phospho-D-ribosyl)imidazole-4-carboxamide + (6S)-5,6,7,8-tetrahydrofolate. The catalysed reaction is IMP + H2O = 5-formamido-1-(5-phospho-D-ribosyl)imidazole-4-carboxamide. It functions in the pathway purine metabolism; IMP biosynthesis via de novo pathway; 5-formamido-1-(5-phospho-D-ribosyl)imidazole-4-carboxamide from 5-amino-1-(5-phospho-D-ribosyl)imidazole-4-carboxamide (10-formyl THF route): step 1/1. Its pathway is purine metabolism; IMP biosynthesis via de novo pathway; IMP from 5-formamido-1-(5-phospho-D-ribosyl)imidazole-4-carboxamide: step 1/1. This is Bifunctional purine biosynthesis protein PurH from Escherichia fergusonii (strain ATCC 35469 / DSM 13698 / CCUG 18766 / IAM 14443 / JCM 21226 / LMG 7866 / NBRC 102419 / NCTC 12128 / CDC 0568-73).